We begin with the raw amino-acid sequence, 363 residues long: NAD(P)H-quinone oxidoreductase subunit 1, chloroplastic (363 aa).

Helical transmembrane passes span 30–50 (LVPI…IVWL), 98–118 (FSIG…VIPF), 127–147 (LSIG…GLLM), 165–185 (AAQS…ISLL), 203–223 (FWGW…ISSL), 248–268 (YSGI…LVSS), 300–320 (VFGT…FLFI), and 336–356 (LLNL…LLTT).

It belongs to the complex I subunit 1 family. In terms of assembly, NDH is composed of at least 16 different subunits, 5 of which are encoded in the nucleus.

The protein resides in the plastid. The protein localises to the chloroplast thylakoid membrane. It catalyses the reaction a plastoquinone + NADH + (n+1) H(+)(in) = a plastoquinol + NAD(+) + n H(+)(out). The enzyme catalyses a plastoquinone + NADPH + (n+1) H(+)(in) = a plastoquinol + NADP(+) + n H(+)(out). Functionally, NDH shuttles electrons from NAD(P)H:plastoquinone, via FMN and iron-sulfur (Fe-S) centers, to quinones in the photosynthetic chain and possibly in a chloroplast respiratory chain. The immediate electron acceptor for the enzyme in this species is believed to be plastoquinone. Couples the redox reaction to proton translocation, and thus conserves the redox energy in a proton gradient. The sequence is that of NAD(P)H-quinone oxidoreductase subunit 1, chloroplastic from Solanum lycopersicum (Tomato).